The sequence spans 507 residues: Histidine ammonia-lyase (507 aa).

Residues Ala141–Gly143 constitute a cross-link (5-imidazolinone (Ala-Gly)). Ser142 carries the 2,3-didehydroalanine (Ser) modification.

The protein belongs to the PAL/histidase family. Contains an active site 4-methylidene-imidazol-5-one (MIO), which is formed autocatalytically by cyclization and dehydration of residues Ala-Ser-Gly.

The protein localises to the cytoplasm. The catalysed reaction is L-histidine = trans-urocanate + NH4(+). It functions in the pathway amino-acid degradation; L-histidine degradation into L-glutamate; N-formimidoyl-L-glutamate from L-histidine: step 1/3. This is Histidine ammonia-lyase from Paraburkholderia phytofirmans (strain DSM 17436 / LMG 22146 / PsJN) (Burkholderia phytofirmans).